Reading from the N-terminus, the 422-residue chain is Golgi-associated RAB2 interactor protein 2 (422 aa).

The tract at residues 353–404 (PVESEANTSKEMKDKTSEEKMPDFQSTALKAEESRSLRTESNTSVLSPHIKS) is disordered. Positions 360 to 374 (TSKEMKDKTSEEKMP) are enriched in basic and acidic residues.

It belongs to the GARIN family. In terms of assembly, interacts with CALM1. Expressed in spermatozoa (at protein level).

The protein localises to the cell projection. The protein resides in the cilium. It localises to the flagellum. Seems to play a role in sperm motility. The polypeptide is Golgi-associated RAB2 interactor protein 2 (Homo sapiens (Human)).